The primary structure comprises 261 residues: Phosphate import ATP-binding protein PstB 1 (261 aa).

The 249-residue stretch at 8 to 256 (IKVNNLSFYY…PHDSRTREYV (249 aa)) folds into the ABC transporter domain. Position 40-47 (40-47 (GPSGCGKS)) interacts with ATP.

This sequence belongs to the ABC transporter superfamily. Phosphate importer (TC 3.A.1.7) family. The complex is composed of two ATP-binding proteins (PstB), two transmembrane proteins (PstC and PstA) and a solute-binding protein (PstS).

It is found in the cell inner membrane. The catalysed reaction is phosphate(out) + ATP + H2O = ADP + 2 phosphate(in) + H(+). Part of the ABC transporter complex PstSACB involved in phosphate import. Responsible for energy coupling to the transport system. In Nostoc sp. (strain PCC 7120 / SAG 25.82 / UTEX 2576), this protein is Phosphate import ATP-binding protein PstB 1.